We begin with the raw amino-acid sequence, 290 residues long: Light-independent protochlorophyllide reductase iron-sulfur ATP-binding protein (290 aa).

ATP-binding positions include 10 to 15 (GIGKST) and Lys-39. Ser-14 provides a ligand contact to Mg(2+). [4Fe-4S] cluster contacts are provided by Cys-95 and Cys-129. Residue 180–181 (NR) participates in ATP binding.

This sequence belongs to the NifH/BchL/ChlL family. In terms of assembly, homodimer. Protochlorophyllide reductase is composed of three subunits; ChlL, ChlN and ChlB. Requires [4Fe-4S] cluster as cofactor.

Its subcellular location is the plastid. It is found in the chloroplast. It catalyses the reaction chlorophyllide a + oxidized 2[4Fe-4S]-[ferredoxin] + 2 ADP + 2 phosphate = protochlorophyllide a + reduced 2[4Fe-4S]-[ferredoxin] + 2 ATP + 2 H2O. Its pathway is porphyrin-containing compound metabolism; chlorophyll biosynthesis (light-independent). Its function is as follows. Component of the dark-operative protochlorophyllide reductase (DPOR) that uses Mg-ATP and reduced ferredoxin to reduce ring D of protochlorophyllide (Pchlide) to form chlorophyllide a (Chlide). This reaction is light-independent. The L component serves as a unique electron donor to the NB-component of the complex, and binds Mg-ATP. In Pyropia yezoensis (Susabi-nori), this protein is Light-independent protochlorophyllide reductase iron-sulfur ATP-binding protein.